The sequence spans 83 residues: Weak toxin DE-1 homolog 1 (83 aa).

An N-terminal signal peptide occupies residues Met1–Thr21. 4 disulfide bridges follow: Cys24–Cys45, Cys38–Cys62, Cys64–Cys75, and Cys76–Cys81.

It belongs to the three-finger toxin family. Short-chain subfamily. Type I alpha-neurotoxin sub-subfamily. Expressed by the venom gland.

It localises to the secreted. Its function is as follows. Binds to muscle nicotinic acetylcholine receptor (nAChR) and inhibit acetylcholine from binding to the receptor, thereby impairing neuromuscular transmission. The sequence is that of Weak toxin DE-1 homolog 1 from Ophiophagus hannah (King cobra).